The chain runs to 104 residues: Large ribosomal subunit protein uL24 (104 aa).

It belongs to the universal ribosomal protein uL24 family. Part of the 50S ribosomal subunit.

One of two assembly initiator proteins, it binds directly to the 5'-end of the 23S rRNA, where it nucleates assembly of the 50S subunit. In terms of biological role, one of the proteins that surrounds the polypeptide exit tunnel on the outside of the subunit. The sequence is that of Large ribosomal subunit protein uL24 from Pseudoalteromonas atlantica (strain T6c / ATCC BAA-1087).